We begin with the raw amino-acid sequence, 623 residues long: ATP-dependent lipid A-core flippase (623 aa).

Helical transmembrane passes span 66–86 (LVLAVLLMAGAAATQPTLAVI), 103–123 (VWFLPLAVVGLILLRGICNFF), 190–210 (LVVIALIGVLLYMSWALTLII), 290–310 (LTPLTQVCISVAVGAVIAVAL), and 317–337 (ALTVGSFASFMAALAQIFDPI). An ABC transmembrane type-1 domain is found at 67–349 (VLAVLLMAGA…LTNLAGKMQK (283 aa)). Residues 382 to 618 (VEFRAVSHRF…NGLYASLYNM (237 aa)) form the ABC transporter domain. 416–423 (GRSGSGKT) serves as a coordination point for ATP.

It belongs to the ABC transporter superfamily. Lipid exporter (TC 3.A.1.106) family. In terms of assembly, homodimer.

The protein localises to the cell inner membrane. It catalyses the reaction ATP + H2O + lipid A-core oligosaccharideSide 1 = ADP + phosphate + lipid A-core oligosaccharideSide 2.. Its function is as follows. Involved in lipopolysaccharide (LPS) biosynthesis. Translocates lipid A-core from the inner to the outer leaflet of the inner membrane. Transmembrane domains (TMD) form a pore in the inner membrane and the ATP-binding domain (NBD) is responsible for energy generation. The polypeptide is ATP-dependent lipid A-core flippase (Bordetella bronchiseptica (strain ATCC BAA-588 / NCTC 13252 / RB50) (Alcaligenes bronchisepticus)).